A 178-amino-acid polypeptide reads, in one-letter code: Ribulose bisphosphate carboxylase small subunit, chloroplastic (178 aa).

The transit peptide at 1-54 (MALISSAAVTTINRAPVQANLATPFTGLKSSAGFPVTKKNNDITSITSNGSRVN) directs the protein to the chloroplast.

This sequence belongs to the RuBisCO small chain family. Heterohexadecamer of 8 large and 8 small subunits.

The protein resides in the plastid. Its subcellular location is the chloroplast. Functionally, ruBisCO catalyzes two reactions: the carboxylation of D-ribulose 1,5-bisphosphate, the primary event in carbon dioxide fixation, as well as the oxidative fragmentation of the pentose substrate. Both reactions occur simultaneously and in competition at the same active site. Although the small subunit is not catalytic it is essential for maximal activity. The protein is Ribulose bisphosphate carboxylase small subunit, chloroplastic of Trifolium repens (Creeping white clover).